Consider the following 204-residue polypeptide: Recombination protein RecR (204 aa).

The segment at 59–74 (CTRCNTFTELEICGTC) adopts a C4-type zinc-finger fold. Residues 82-181 (TLLCVVETPA…KVSRLARGVP (100 aa)) form the Toprim domain.

It belongs to the RecR family.

Its function is as follows. May play a role in DNA repair. It seems to be involved in an RecBC-independent recombinational process of DNA repair. It may act with RecF and RecO. In Cupriavidus metallidurans (strain ATCC 43123 / DSM 2839 / NBRC 102507 / CH34) (Ralstonia metallidurans), this protein is Recombination protein RecR.